The sequence spans 64 residues: Large ribosomal subunit protein bL35 (64 aa).

It belongs to the bacterial ribosomal protein bL35 family.

This Clavibacter michiganensis subsp. michiganensis (strain NCPPB 382) protein is Large ribosomal subunit protein bL35.